We begin with the raw amino-acid sequence, 134 residues long: Probable dihydroneopterin aldolase (134 aa).

Substrate contacts are provided by residues Glu26, Tyr59, and 78 to 79; that span reads IE. Lys106 serves as the catalytic Proton donor/acceptor.

Belongs to the DHNA family.

It carries out the reaction 7,8-dihydroneopterin = 6-hydroxymethyl-7,8-dihydropterin + glycolaldehyde. It functions in the pathway cofactor biosynthesis; tetrahydrofolate biosynthesis; 2-amino-4-hydroxy-6-hydroxymethyl-7,8-dihydropteridine diphosphate from 7,8-dihydroneopterin triphosphate: step 3/4. Catalyzes the conversion of 7,8-dihydroneopterin to 6-hydroxymethyl-7,8-dihydropterin. This Chlamydia pneumoniae (Chlamydophila pneumoniae) protein is Probable dihydroneopterin aldolase (folB).